A 350-amino-acid polypeptide reads, in one-letter code: D-alanine--D-alanine ligase (350 aa).

The 209-residue stretch at 138–346 (KSAFSSAGLS…LEQLVHKLIQ (209 aa)) folds into the ATP-grasp domain. 173–228 (ERELNYPCFVKPANLGSSVGISKVRSRQELEAGLEQAAALDPRLVVEQGVNAREVE) provides a ligand contact to ATP. The Mg(2+) site is built by aspartate 299, glutamate 313, and asparagine 315.

It belongs to the D-alanine--D-alanine ligase family. The cofactor is Mg(2+). Mn(2+) is required as a cofactor.

It localises to the cytoplasm. It catalyses the reaction 2 D-alanine + ATP = D-alanyl-D-alanine + ADP + phosphate + H(+). The protein operates within cell wall biogenesis; peptidoglycan biosynthesis. Cell wall formation. In Synechococcus sp. (strain CC9605), this protein is D-alanine--D-alanine ligase.